The following is a 649-amino-acid chain: Macrolide export ATP-binding/permease protein MacB 1 (649 aa).

The region spanning 5–243 is the ABC transporter domain; that stretch reads LELEGIRRSY…AAAELMSLTP (239 aa). 41–48 serves as a coordination point for ATP; sequence GASGSGKS. 5 consecutive transmembrane segments (helical) span residues 274-294, 420-440, 524-544, 578-598, and 608-628; these read ALTM…LVVG, VVGQ…VVAE, LFLT…VMNI, VLVC…IGLI, and IAFP…IGVV.

Belongs to the ABC transporter superfamily. Macrolide exporter (TC 3.A.1.122) family. In terms of assembly, homodimer. Part of the tripartite efflux system MacAB-TolC, which is composed of an inner membrane transporter, MacB, a periplasmic membrane fusion protein, MacA, and an outer membrane component, TolC. The complex forms a large protein conduit and can translocate molecules across both the inner and outer membranes. Interacts with MacA.

It is found in the cell inner membrane. In terms of biological role, part of the tripartite efflux system MacAB-TolC. MacB is a non-canonical ABC transporter that contains transmembrane domains (TMD), which form a pore in the inner membrane, and an ATP-binding domain (NBD), which is responsible for energy generation. Confers resistance against macrolides. The chain is Macrolide export ATP-binding/permease protein MacB 1 from Yersinia pestis bv. Antiqua (strain Antiqua).